The following is a 386-amino-acid chain: S-adenosylmethionine synthase (386 aa).

Residue H16 coordinates ATP. D18 provides a ligand contact to Mg(2+). Position 44 (E44) interacts with K(+). Positions 57 and 100 each coordinate L-methionine. Residues 100–110 form a flexible loop region; that stretch reads QSGDIAMGVDE. ATP-binding positions include 165 to 167, D240, 246 to 247, A263, and K267; these read DAK and RK. L-methionine is bound at residue D240. K271 serves as a coordination point for L-methionine.

Belongs to the AdoMet synthase family. As to quaternary structure, homotetramer; dimer of dimers. The cofactor is Mg(2+). K(+) is required as a cofactor.

It localises to the cytoplasm. The enzyme catalyses L-methionine + ATP + H2O = S-adenosyl-L-methionine + phosphate + diphosphate. The protein operates within amino-acid biosynthesis; S-adenosyl-L-methionine biosynthesis; S-adenosyl-L-methionine from L-methionine: step 1/1. In terms of biological role, catalyzes the formation of S-adenosylmethionine (AdoMet) from methionine and ATP. The overall synthetic reaction is composed of two sequential steps, AdoMet formation and the subsequent tripolyphosphate hydrolysis which occurs prior to release of AdoMet from the enzyme. This is S-adenosylmethionine synthase from Hahella chejuensis (strain KCTC 2396).